We begin with the raw amino-acid sequence, 236 residues long: Phycobilisome rod-core linker polypeptide cpcG (236 aa).

The 183-residue stretch at 11-193 (STQNQRVNGF…LDYNFLYKKN (183 aa)) folds into the PBS-linker domain.

It belongs to the phycobilisome linker protein family. In terms of assembly, the phycobilisome is a hemidiscoidal structure that is composed of two distinct substructures: a core complex and a number of rods radiating from the core.

The protein localises to the plastid. Its subcellular location is the chloroplast. The protein resides in the chloroplast thylakoid membrane. Rod-core linker protein required for attachment of phycocyanin to allophycocyanin in cores of phycobilisomes. Its function is as follows. Linker polypeptides determine the state of aggregation and the location of the disk-shaped phycobiliprotein units within the phycobilisome and modulate their spectroscopic properties in order to mediate a directed and optimal energy transfer. The polypeptide is Phycobilisome rod-core linker polypeptide cpcG (cpcG) (Aglaothamnion neglectum (Red alga)).